The chain runs to 804 residues: Endoplasmin (804 aa).

The N-terminal stretch at 1–21 (MRALWVLGLCCVLLTFGSVRA) is a signal peptide. The SRT pseudosubstrate motif signature appears at 42–44 (SRT). A glycan (N-linked (GlcNAc...) asparagine) is linked at asparagine 62. Serine 64 carries the phosphoserine modification. The N-linked (GlcNAc...) asparagine glycan is linked to asparagine 107. 3 residues coordinate ATP: asparagine 107, aspartate 149, and asparagine 162. Lysine 168 carries the N6-(2-hydroxyisobutyryl)lysine modification. Position 172 is a phosphoserine (serine 172). ATP is bound at residue phenylalanine 199. N-linked (GlcNAc...) asparagine glycosylation occurs at asparagine 217. Residues 288 to 323 (TVEEPMEEEEAAKEEKEESDDEAAVEEEEEEKKPKT) form a disordered region. A compositionally biased stretch (acidic residues) spans 289 to 317 (VEEPMEEEEAAKEEKEESDDEAAVEEEEE). Serine 306 and serine 403 each carry phosphoserine. Residue lysine 404 is modified to N6-succinyllysine. Asparagine 445 carries N-linked (GlcNAc...) asparagine glycosylation. Serine 447 is subject to Phosphoserine. Lysine 479 is subject to N6-acetyllysine. Residues asparagine 481 and asparagine 502 are each glycosylated (N-linked (GlcNAc...) asparagine). Position 633 is an N6-succinyllysine (lysine 633). The interval 750–804 (DPDAKVEDEPEEEPEETTEDTTEDTEQDEDEEMDVGTDEEEQETAKESTAEKDEL) is disordered. Residues 757 to 791 (DEPEEEPEETTEDTTEDTEQDEDEEMDVGTDEEEQ) are compositionally biased toward acidic residues. Threonine 786 carries the phosphothreonine modification. The segment covering 792-804 (ETAKESTAEKDEL) has biased composition (basic and acidic residues). The Prevents secretion from ER signature appears at 801-804 (KDEL).

The protein belongs to the heat shock protein 90 family. In terms of assembly, homodimer; disulfide-linked. Component of an EIF2 complex at least composed of CELF1/CUGBP1, CALR, CALR3, EIF2S1, EIF2S2, HSP90B1 and HSPA5. Part of a large chaperone multiprotein complex comprising DNAJB11, HSP90B1, HSPA5, HYOU, PDIA2, PDIA4, PDIA6, PPIB, SDF2L1, UGGT1 and very small amounts of ERP29, but not, or at very low levels, CALR nor CANX. Interacts with AIMP1; regulates its retention in the endoplasmic reticulum. Hyperglycosylated form interacts with OS9; promoting its degradation by the endoplasmic reticulum associated degradation (ERAD). Interacts with CNPY3. This interaction is disrupted in the presence of ATP. Interacts with TLR4 and TLR9, but not with TLR3. Interacts with MZB1 in a calcium-dependent manner. Interacts with METTL23. Interacts with IL1B; the interaction facilitates cargo translocation into the ERGIC. Interacts with EIF2AK3. Post-translationally, phosphorylated by CK2. N-glycosylated cotranslationally at Asn-217 by STT3A-containing OST-A complex: this glycosylation is constitutive. In response to various stress, 5 additional facultative sites (Asn-62, Asn-107, Asn-445, Asn-481 and Asn-502) can be glycosylated post-translationally by STT3B-containing OST-B complex, leading to a hyperglycosylated form that is degraded by the ER-associated degradation (ERAD) pathway. In normal conditions, the OST-A complex together with CCDC134 prevent glycosylation at facultative sites during protein folding, thereby preventing hyperglycosylation. Mechanistically, nascent HSP90B1 is tethered during translation to a specialized CCDC134-containing translocon that forms a microenvironment for its folding, in which STT3A associates with the SRT pseudosubstrate motif, and prevents access to facultative glycosylation sites until folding is completed, rendering its facultative sites inaccessible to the OST-B complex.

It localises to the endoplasmic reticulum lumen. The protein resides in the sarcoplasmic reticulum lumen. Its subcellular location is the melanosome. It catalyses the reaction ATP + H2O = ADP + phosphate + H(+). Its function is as follows. ATP-dependent chaperone involved in the processing of proteins in the endoplasmic reticulum, regulating their transport. Together with MESD, acts as a modulator of the Wnt pathway by promoting the folding of LRP6, a coreceptor of the canonical Wnt pathway. When associated with CNPY3, required for proper folding of Toll-like receptors. Promotes folding and trafficking of TLR4 to the cell surface. May participate in the unfolding of cytosolic leaderless cargos (lacking the secretion signal sequence) such as the interleukin 1/IL-1 to facilitate their translocation into the ERGIC (endoplasmic reticulum-Golgi intermediate compartment) and secretion; the translocation process is mediated by the cargo receptor TMED10. This is Endoplasmin (HSP90B1) from Macaca fascicularis (Crab-eating macaque).